We begin with the raw amino-acid sequence, 635 residues long: Arabinoxylan arabinofuranohydrolase (635 aa).

An N-terminal signal peptide occupies residues 1-26 (MIRKCLVLFLSFALLLSVFPMLNVDA). The active-site Proton acceptor is the Asp49. Glu248 acts as the Proton donor in catalysis. Asn311 is a binding site for substrate. CBM6 domains lie at 379-508 (TRVE…WQFT) and 517-634 (TKVE…IEFS). 13 residues coordinate Ca(2+): Glu382, Glu384, Asn406, Leu407, Asp503, Glu520, Glu522, Asp539, Tyr544, Asp620, Trp624, Asp625, and Asp629.

Belongs to the glycosyl hydrolase 43 family.

It is found in the secreted. It catalyses the reaction Hydrolysis of terminal non-reducing alpha-L-arabinofuranoside residues in alpha-L-arabinosides.. It participates in glycan degradation; xylan degradation. Its activity is regulated as follows. Activated by calcium and magnesium. Inhibited by copper. Its function is as follows. Cleaves arabinose units from O-2- or O-3-monosubstituted xylose residues, thereby assisting in arabinoxylan (AX) and short-chain arabinoxylo-oligosaccharide (AXOS) degradation. Preferres wheat flour xylan over oat spelt xylan as substrate. Does not display endoxylanase activity. The sequence is that of Arabinoxylan arabinofuranohydrolase (xynD) from Paenibacillus polymyxa (Bacillus polymyxa).